The following is a 740-amino-acid chain: Probable RNA-dependent RNA polymerase 1 (740 aa).

Belongs to the RdRP family.

The enzyme catalyses RNA(n) + a ribonucleoside 5'-triphosphate = RNA(n+1) + diphosphate. Probably involved in the RNA silencing pathway and required for the generation of small interfering RNAs (siRNAs). This is Probable RNA-dependent RNA polymerase 1 (RDR1) from Oryza sativa subsp. japonica (Rice).